Here is a 438-residue protein sequence, read N- to C-terminus: tRNA modification GTPase MnmE (438 aa).

The (6S)-5-formyl-5,6,7,8-tetrahydrofolate site is built by R21, E79, and K118. The TrmE-type G domain occupies G215–R362. Residue N225 participates in K(+) binding. Residues N225–S230, T244–T250, and D269–G272 each bind GTP. Residue S229 participates in Mg(2+) binding. 3 residues coordinate K(+): T244, I246, and T249. T250 is a binding site for Mg(2+). K438 contacts (6S)-5-formyl-5,6,7,8-tetrahydrofolate.

It belongs to the TRAFAC class TrmE-Era-EngA-EngB-Septin-like GTPase superfamily. TrmE GTPase family. In terms of assembly, homodimer. Heterotetramer of two MnmE and two MnmG subunits. Requires K(+) as cofactor.

Its subcellular location is the cytoplasm. Exhibits a very high intrinsic GTPase hydrolysis rate. Involved in the addition of a carboxymethylaminomethyl (cmnm) group at the wobble position (U34) of certain tRNAs, forming tRNA-cmnm(5)s(2)U34. This chain is tRNA modification GTPase MnmE, found in Maricaulis maris (strain MCS10) (Caulobacter maris).